Reading from the N-terminus, the 213-residue chain is CASP-like protein UU2 (213 aa).

The disordered stretch occupies residues 1 to 26 (MEDPKGAWQSDVFDNGRDFKPHDKAP). The Cytoplasmic portion of the chain corresponds to 1 to 53 (MEDPKGAWQSDVFDNGRDFKPHDKAPANVTAGTTPPMYNVGAGGSEGNSKALS). Residues 14–25 (DNGRDFKPHDKA) are compositionally biased toward basic and acidic residues. Residues 54 to 74 (IISIVLRCLSIMFNVVSLGVI) form a helical membrane-spanning segment. The Extracellular segment spans residues 75–96 (ASNQGKSYFVVWRTLNSSNMQY). N-linked (GlcNAc...) asparagine glycosylation occurs at N90. A helical transmembrane segment spans residues 97-117 (LFAINVIVLVYCVVQLILSII). Over 118 to 137 (NLVQGKMVLSGPTQPASTIT) the chain is Cytoplasmic. Residues 138–158 (YICDQGLTYMLMAGFGAGVAL) traverse the membrane as a helical segment. Over 159 to 184 (QASVDKGESGMLDCSGANEFCGKNKA) the chain is Extracellular. A helical transmembrane segment spans residues 185–205 (SAALSFLGFVCIALSANLNYL). Residues 206–213 (RLYFMAAK) are Cytoplasmic-facing.

The protein belongs to the Casparian strip membrane proteins (CASP) family. In terms of assembly, homodimer and heterodimers.

Its subcellular location is the cell membrane. The chain is CASP-like protein UU2 from Physcomitrium patens (Spreading-leaved earth moss).